We begin with the raw amino-acid sequence, 336 residues long: Dihydroorotate dehydrogenase (quinone) (336 aa).

FMN is bound by residues 62-66 and T86; that span reads AGLDK. Residue K66 participates in substrate binding. 111 to 115 is a substrate binding site; sequence NRMGF. FMN contacts are provided by N139 and N172. N172 serves as a coordination point for substrate. The Nucleophile role is filled by S175. N177 provides a ligand contact to substrate. Residues K217 and T245 each coordinate FMN. 246 to 247 contributes to the substrate binding site; the sequence is NT. Residues G268, G297, and 318-319 each bind FMN; that span reads YS.

It belongs to the dihydroorotate dehydrogenase family. Type 2 subfamily. In terms of assembly, monomer. FMN is required as a cofactor.

Its subcellular location is the cell membrane. The enzyme catalyses (S)-dihydroorotate + a quinone = orotate + a quinol. It functions in the pathway pyrimidine metabolism; UMP biosynthesis via de novo pathway; orotate from (S)-dihydroorotate (quinone route): step 1/1. Functionally, catalyzes the conversion of dihydroorotate to orotate with quinone as electron acceptor. This is Dihydroorotate dehydrogenase (quinone) from Yersinia pseudotuberculosis serotype O:1b (strain IP 31758).